The primary structure comprises 356 residues: MHHQWLLLAACFWVIFMFMVASKFITLTFKDPDVYSAKQEFLFLTTMPEVRKLPEEKHIPEELKPTGKELPDSRLVQPLVYMERLELIRNVCRDDALKNLSHTPVSKFVLDRIFVCDKHKILFCQTPKVGNTQWKKVLIVLNGAFPSIEEIPENVVHDHEKNGLPRLSSFSDAEIQKRLKTYFKFFIVRDPFERLISAFKDKFVHNPRFEPWYRHEIAPGIIRKYRRNRTESRGIQFEDFVRYLGDPNHRWLDLQFGDHIIHWVTYVELCAPCEIMYSVIGHHETLEDDAPYILKEAGIDHLVSYPTIPPGITVYNRTKVEHYFLGISKRDIRRLYARFEGDFKLFGYQKPDFLLN.

Residues 1-6 (MHHQWL) lie on the Cytoplasmic side of the membrane. The helical; Signal-anchor for type II membrane protein transmembrane segment at 7–27 (LLAACFWVIFMFMVASKFITL) threads the bilayer. Residues 28 to 356 (TFKDPDVYSA…GYQKPDFLLN (329 aa)) are Lumenal-facing. N-linked (GlcNAc...) asparagine glycosylation occurs at asparagine 99. Residues 127–133 (PKVGNTQ) and 189–197 (RDPFERLIS) each bind 3'-phosphoadenylyl sulfate. Residues asparagine 228 and asparagine 316 are each glycosylated (N-linked (GlcNAc...) asparagine).

The protein belongs to the sulfotransferase 2 family.

The protein resides in the golgi apparatus membrane. The enzyme catalyses 3-O-{beta-D-GlcA-(1-&gt;[3)-alpha-D-Xyl-(1-&gt;3)-beta-D-GlcA-(1-&gt;](n)-4)-beta-D-Xyl-(1-&gt;4)-Rib-ol-P-Rib-ol-P-3-beta-D-GalNAc-(1-&gt;3)-beta-D-GlcNAc-(1-&gt;4)-O-6-P-alpha-D-Man}-L-Thr-[protein] + 3'-phosphoadenylyl sulfate = 3-O-{O-3-S-beta-D-GlcA-(1-&gt;[3)-alpha-D-Xyl-(1-&gt;3)-beta-D-GlcA-(1-&gt;](n)-4)-beta-D-Xyl-(1-&gt;4)-Rib-ol-P-Rib-ol-P-3-beta-D-GalNAc-(1-&gt;3)-beta-D-GlcNAc-(1-&gt;4)-O-6-P-alpha-D-Man}-L-Thr-[protein] + adenosine 3',5'-bisphosphate + H(+). The catalysed reaction is 17beta-estradiol 3-O-(beta-D-glucuronate) + 3'-phosphoadenylyl sulfate = 17beta-estradiol 3-O-(3-sulfo-beta-D-glucuronate) + adenosine 3',5'-bisphosphate + H(+). It carries out the reaction 17beta-estradiol 3-O-(beta-D-glucuronate) 17-sulfate + 3'-phosphoadenylyl sulfate = 17beta-estradiol 3-O-(3-sulfo-beta-D-glucuronate) 17-sulfate + adenosine 3',5'-bisphosphate + H(+). It catalyses the reaction 17beta-estradiol 17-O-(beta-D-glucuronate) + 3'-phosphoadenylyl sulfate = 17beta-estradiol 17-O-(3-sulfo-beta-D-glucuronate) + adenosine 3',5'-bisphosphate + H(+). The enzyme catalyses 16alpha,17beta-estriol 3-O-(beta-D-glucuronate) + 3'-phosphoadenylyl sulfate = 16alpha,17beta-estriol 3-O-(3-sulfo-beta-D-glucuronate) + adenosine 3',5'-bisphosphate + H(+). The catalysed reaction is 16alpha,17beta-estriol 16-O-(beta-D-glucuronate) + 3'-phosphoadenylyl sulfate = 16alpha,17beta-estriol 16-O-(3-sulfo-beta-D-glucuronate) + adenosine 3',5'-bisphosphate + H(+). It carries out the reaction 16alpha,17beta-estriol 17-O-(beta-D-glucuronate) + 3'-phosphoadenylyl sulfate = 16alpha,17beta-estriol 17-O-(3-sulfo-beta-D-glucuronate) + adenosine 3',5'-bisphosphate + H(+). It catalyses the reaction estrone 3-O-(beta-D-glucuronate) + 3'-phosphoadenylyl sulfate = estrone 3-O-(3-sulfo-beta-D-glucuronate) + adenosine 3',5'-bisphosphate + H(+). The enzyme catalyses 3alpha,20alpha-dihydroxy-5beta-pregnane 3-O-(beta-D-glucuronate) + 3'-phosphoadenylyl sulfate = 3alpha,20alpha-dihydroxy-5beta-pregnane 3-O-(3-sulfo-beta-D-glucuronate) + adenosine 3',5'-bisphosphate + H(+). The catalysed reaction is testosterone 17-O-(beta-D-glucuronate) + 3'-phosphoadenylyl sulfate = testosterone 17-O-(3-sulfo-beta-D-glucuronate) + adenosine 3',5'-bisphosphate + H(+). It carries out the reaction 3beta-androst-5-en-17-one 3-O-(beta-D-glucuronate) + 3'-phosphoadenylyl sulfate = 3beta-androst-5-en-17-one 3-O-(3-sulfo-beta-D-glucuronate) + adenosine 3',5'-bisphosphate + H(+). It catalyses the reaction 3alpha,17alpha-dihydroxy-5beta-androstane-11-one-17beta-carboxylate 3-O-(beta-D-glucuronate) + 3'-phosphoadenylyl sulfate = 3alpha,17alpha-dihydroxy-5beta-androstane-11-one-17beta-carboxylate 3-O-(3-sulfo-beta-D-glucuronate) + adenosine 3',5'-bisphosphate + H(+). The enzyme catalyses 3alpha-hydroxyetiocholan-17-one 3-O-(beta-D-glucuronate) + 3'-phosphoadenylyl sulfate = 3alpha-hydroxyetiocholan-17-one 3-O-(3-sulfo-beta-D-glucuronate) + adenosine 3',5'-bisphosphate + H(+). Its pathway is steroid metabolism. The protein operates within protein modification; carbohydrate sulfation. Its function is as follows. Catalyzes the transfer of sulfate from 3'-phosphoadenylyl sulfate (PAPS) to position 3 of terminal glucuronic acid of both protein- and lipid-linked oligosaccharides. Participates in biosynthesis of HNK-1 carbohydrate structure 3-O-sulfo-beta-D-GlcA-(1-&gt;3)-beta-D-Gal-(1-&gt;4)-D-GlcNAc-R, a sulfated glucuronyl-lactosaminyl residue carried by many neural recognition molecules, which is involved in cell interactions during ontogenetic development and in synaptic plasticity in the adult. May be indirectly involved in synapse plasticity of the hippocampus, via its role in HNK-1 biosynthesis. Sulfates terminal glucuronyl residue of the laminin globular (LG)-domain binding epitope on DAG1/alpha-dystroglycan and prevents further polymerization by LARGE1 glycosyltransferase. Likely defines the chain length of LG epitope, conferring binding specificity to extracellular matrix components. Plays a role in down-regulating the steroid hormones. Sulfates glucuronidated estrogens and androgens with an impact in hormone cycle and fertility. Has a preference for glucuronyl moiety at the 3-hydroxyl group of a sterol ring rather than the 17-hydroxyl group, showing high catalytic efficiency for 17beta-estradiol 3-O-(beta-D-glucuronate) and dehydroepiandrosterone 3-O-(beta-D-glucuronate) hormones. The polypeptide is Carbohydrate sulfotransferase 10 (CHST10) (Pongo abelii (Sumatran orangutan)).